Consider the following 201-residue polypeptide: Natural cytotoxicity triggering receptor 3 (201 aa).

The first 18 residues, methionine 1–alanine 18, serve as a signal peptide directing secretion. The Ig-like domain maps to leucine 19–valine 126. Over leucine 19 to glycine 135 the chain is Extracellular. Cysteines 39 and 108 form a disulfide. 2 N-linked (GlcNAc...) asparagine glycosylation sites follow: asparagine 42 and asparagine 121. A helical membrane pass occupies residues alanine 136–valine 156. Topologically, residues glycine 157–glycine 201 are cytoplasmic.

This sequence belongs to the natural cytotoxicity receptor (NCR) family. As to quaternary structure, homodimer in the unliganted form. Interacts with CD3Z. Interacts with and is activated by binding to NCR3LG1. Interacts with and is activated by binding to BAG6. Interacts with and is inhibited by binding to LGALS3.

It localises to the cell membrane. Functionally, cell membrane receptor of natural killer/NK cells that is activated by binding of extracellular ligands including BAG6 and NCR3LG1. Stimulates NK cells cytotoxicity toward neighboring cells producing these ligands. It controls, for instance, NK cells cytotoxicity against tumor cells. Engagement of NCR3 by BAG6 also promotes myeloid dendritic cells (DC) maturation, both through killing DCs that did not acquire a mature phenotype, and inducing the release by NK cells of TNFA and IFNG that promote DC maturation. The protein is Natural cytotoxicity triggering receptor 3 (NCR3) of Pan troglodytes (Chimpanzee).